The following is a 335-amino-acid chain: Mycobacterial beta-ketoacyl-[acyl-carrier-protein] synthase III (335 aa).

Active-site residues include cysteine 122 and histidine 258. The segment at 259-263 (QANSR) is ACP-binding. Asparagine 289 is an active-site residue.

The protein belongs to the thiolase-like superfamily. FabH family. In terms of assembly, homodimer.

The protein resides in the cytoplasm. The catalysed reaction is malonyl-[ACP] + dodecanoyl-CoA + H(+) = 3-oxotetradecanoyl-[ACP] + CO2 + CoA. It functions in the pathway lipid metabolism; fatty acid biosynthesis. Its pathway is lipid metabolism; mycolic acid biosynthesis. Catalyzes the condensation reaction of fatty acid synthesis by the addition to an acyl acceptor of two carbons from malonyl-ACP. Catalyzes the first condensation reaction which initiates fatty acid synthesis and may therefore play a role in governing the total rate of fatty acid production. Possesses both acetoacetyl-ACP synthase and acetyl transacylase activities. Its substrate specificity determines the biosynthesis of branched-chain and/or straight-chain of fatty acids. The protein is Mycobacterial beta-ketoacyl-[acyl-carrier-protein] synthase III of Mycobacterium ulcerans (strain Agy99).